A 702-amino-acid polypeptide reads, in one-letter code: Autophagy-related protein 9 (702 aa).

At 1-205 (MFYQPAQNKK…GKGLSCIIVH (205 aa)) the chain is on the cytoplasmic side. A disordered region spans residues 35–128 (QESLDSDEDE…SKQKPALPNF (94 aa)). A compositionally biased stretch (acidic residues) spans 38 to 47 (LDSDEDESSP). Over residues 94–107 (SSKVPSKHPSPSFP) the composition is skewed to low complexity. Residues 108-120 (ETTSLRNLQNGSK) are compositionally biased toward polar residues. A helical membrane pass occupies residues 206 to 223 (RLFQILTVSFVIGFTTFI). The Lumenal segment spans residues 224–251 (TSCIDWPAVTPHGSLAGVTKSQCIAQMS). A helical transmembrane segment spans residues 252 to 270 (PITYLVLWLFLSFLLALWI). The Cytoplasmic portion of the chain corresponds to 271-421 (YYLTDIPRLW…RRRFIVAGFL (151 aa)). The stretch at 422-446 (NCLFAPIVAIYLVIHNFFRYFNEYH) is an intramembrane region. Residues 447-496 (KNPGALSTRRYTPLALWTFREYNELQHFFDERINDSYAAASHYVSQFPDF) are Cytoplasmic-facing. A helical membrane pass occupies residues 497 to 522 (NMIRLFKYISFILGSFTAILVIITVF). The Lumenal segment spans residues 523 to 537 (DPELMVTFEITKDRS). A helical transmembrane segment spans residues 538-555 (VLFYLGLFGSLIAVSRSI). Topologically, residues 556 to 603 (IPDETLVFAPEKALRRVITFTHYMPGWWSDNMHSKAVQQEFCSLYSYR) are cytoplasmic. The stretch at 604-624 (IVNLLWEILGILLTPVLLFFT) is an intramembrane region. Topologically, residues 625 to 702 (FPSCSQDIVD…NTEAPRRDLR (78 aa)) are cytoplasmic.

The protein belongs to the ATG9 family. In terms of assembly, homotrimer; forms a homotrimer with a central pore that forms a path between the two membrane leaflets. Interacts with ctl1. In terms of processing, phosphorylated by atg1. Atg1 phosphorylation is required for preautophagosome elongation.

It is found in the preautophagosomal structure membrane. The protein resides in the cytoplasmic vesicle membrane. Its subcellular location is the golgi apparatus membrane. It localises to the endoplasmic reticulum membrane. It catalyses the reaction a 1,2-diacyl-sn-glycero-3-phosphocholine(in) = a 1,2-diacyl-sn-glycero-3-phosphocholine(out). It carries out the reaction a 1,2-diacyl-sn-glycero-3-phospho-L-serine(in) = a 1,2-diacyl-sn-glycero-3-phospho-L-serine(out). The catalysed reaction is a 1,2-diacyl-sn-glycero-3-phosphoethanolamine(in) = a 1,2-diacyl-sn-glycero-3-phosphoethanolamine(out). The enzyme catalyses a 1,2-diacyl-sn-glycero-3-phospho-(1D-myo-inositol-3-phosphate)(in) = a 1,2-diacyl-sn-glycero-3-phospho-(1D-myo-inositol-3-phosphate)(out). Phospholipid scramblase involved in autophagy and cytoplasm to vacuole transport (Cvt) vesicle formation. Cycles between the preautophagosomal structure/phagophore assembly site (PAS) and the cytoplasmic vesicle pool and supplies membrane for the growing autophagosome. Lipid scramblase activity plays a key role in preautophagosomal structure/phagophore assembly by distributing the phospholipids that arrive through atg2 from the cytoplasmic to the luminal leaflet of the bilayer, thereby driving autophagosomal membrane expansion. Also involved in endoplasmic reticulum-specific autophagic process and is essential for the survival of cells subjected to severe ER stress. Different machineries are required for anterograde trafficking to the PAS during either the Cvt pathway or bulk autophagy and for retrograde trafficking. Has a role in meiosis and sporulation. This chain is Autophagy-related protein 9, found in Schizosaccharomyces pombe (strain 972 / ATCC 24843) (Fission yeast).